Consider the following 344-residue polypeptide: Phosphate acyltransferase (344 aa).

Belongs to the PlsX family. In terms of assembly, homodimer. Probably interacts with PlsY.

Its subcellular location is the cytoplasm. The enzyme catalyses a fatty acyl-[ACP] + phosphate = an acyl phosphate + holo-[ACP]. It participates in lipid metabolism; phospholipid metabolism. Functionally, catalyzes the reversible formation of acyl-phosphate (acyl-PO(4)) from acyl-[acyl-carrier-protein] (acyl-ACP). This enzyme utilizes acyl-ACP as fatty acyl donor, but not acyl-CoA. This Blochmanniella floridana protein is Phosphate acyltransferase.